The chain runs to 251 residues: Large ribosomal subunit protein uL16m (251 aa).

The N-terminal 29 residues, M1 to G29, are a transit peptide targeting the mitochondrion.

The protein belongs to the universal ribosomal protein uL16 family. In terms of assembly, component of the mitochondrial large ribosomal subunit (mt-LSU). Mature mammalian 55S mitochondrial ribosomes consist of a small (28S) and a large (39S) subunit. The 28S small subunit contains a 12S ribosomal RNA (12S mt-rRNA) and 30 different proteins. The 39S large subunit contains a 16S rRNA (16S mt-rRNA), a copy of mitochondrial valine transfer RNA (mt-tRNA(Val)), which plays an integral structural role, and 52 different proteins.

It is found in the mitochondrion. This Homo sapiens (Human) protein is Large ribosomal subunit protein uL16m (MRPL16).